A 449-amino-acid chain; its full sequence is Naphthalene 1,2-dioxygenase system, large oxygenase component (449 aa).

The Rieske domain occupies 39–137 (WLFLTHDSLI…LNKKCLGLKE (99 aa)). [2Fe-2S] cluster-binding residues include Cys81, His83, Cys101, and His104. His208, His213, and Asp362 together coordinate Fe cation.

This sequence belongs to the bacterial ring-hydroxylating dioxygenase alpha subunit family. In terms of assembly, the naphthalene dioxygenase (NDO) multicomponent enzyme system is composed of an electron transfer component and a dioxygenase component (iron sulfur protein (ISP)). The electron transfer component is composed of a ferredoxin reductase (NdoR) and a ferredoxin (NdoA), and the dioxygenase component is formed of a heterohexamer (trimer of heterodimers) of three large alpha subunits (NdoB) and three small beta subunits (NdoC). Requires [2Fe-2S] cluster as cofactor. The cofactor is Fe(2+).

The enzyme catalyses naphthalene + NADH + O2 + H(+) = (1R,2S)-1,2-dihydronaphthalene-1,2-diol + NAD(+). The protein operates within aromatic compound metabolism; naphthalene degradation. In terms of biological role, component of the naphthalene dioxygenase (NDO) multicomponent enzyme system which catalyzes the incorporation of both atoms of molecular oxygen into naphthalene to form cis-(1R,2S)-dihydroxy-1,2-dihydronaphthalene. The alpha subunit has a catalytic role in the holoenzyme. Also able to catalyze the cis-dihydroxylation of biphenyl and phenanthrene. The polypeptide is Naphthalene 1,2-dioxygenase system, large oxygenase component (Pseudomonas putida (Arthrobacter siderocapsulatus)).